The primary structure comprises 155 residues: Ribosomal RNA large subunit methyltransferase H (155 aa).

S-adenosyl-L-methionine-binding positions include Leu-72, Gly-103, and 122 to 127 (LSALTL).

Belongs to the RNA methyltransferase RlmH family. In terms of assembly, homodimer.

Its subcellular location is the cytoplasm. The catalysed reaction is pseudouridine(1915) in 23S rRNA + S-adenosyl-L-methionine = N(3)-methylpseudouridine(1915) in 23S rRNA + S-adenosyl-L-homocysteine + H(+). Its function is as follows. Specifically methylates the pseudouridine at position 1915 (m3Psi1915) in 23S rRNA. This is Ribosomal RNA large subunit methyltransferase H from Salmonella dublin (strain CT_02021853).